We begin with the raw amino-acid sequence, 432 residues long: Anaerobic glycerol-3-phosphate dehydrogenase subunit B (432 aa).

This sequence belongs to the anaerobic G-3-P dehydrogenase subunit B family. Composed of a catalytic GlpA/B dimer and of membrane bound GlpC. FMN serves as cofactor.

It carries out the reaction a quinone + sn-glycerol 3-phosphate = dihydroxyacetone phosphate + a quinol. It participates in polyol metabolism; glycerol degradation via glycerol kinase pathway; glycerone phosphate from sn-glycerol 3-phosphate (anaerobic route): step 1/1. Conversion of glycerol 3-phosphate to dihydroxyacetone. Uses fumarate or nitrate as electron acceptor. The sequence is that of Anaerobic glycerol-3-phosphate dehydrogenase subunit B from Haemophilus influenzae (strain PittGG).